The sequence spans 454 residues: Bifunctional protein GlmU (454 aa).

The tract at residues 1–227 (MTQLSVVILA…FMEVEGANNR (227 aa)) is pyrophosphorylase. Residues 9–12 (LAAG), Lys-23, Gln-74, 79–80 (GT), 101–103 (YGD), Gly-138, Glu-152, Asn-167, and Asn-225 contribute to the UDP-N-acetyl-alpha-D-glucosamine site. Asp-103 contributes to the Mg(2+) binding site. Position 225 (Asn-225) interacts with Mg(2+). A linker region spans residues 228–248 (LQLAALERFYQKTQAEKLLLA). The tract at residues 249-454 (GVRLIDPARF…QGWQRPTKKK (206 aa)) is N-acetyltransferase. Arg-331 and Lys-349 together coordinate UDP-N-acetyl-alpha-D-glucosamine. His-361 functions as the Proton acceptor in the catalytic mechanism. UDP-N-acetyl-alpha-D-glucosamine is bound by residues Tyr-364 and Asn-375. Acetyl-CoA is bound by residues Ala-378, 384-385 (NY), Ser-403, Ala-421, and Arg-438.

This sequence in the N-terminal section; belongs to the N-acetylglucosamine-1-phosphate uridyltransferase family. It in the C-terminal section; belongs to the transferase hexapeptide repeat family. Homotrimer. The cofactor is Mg(2+).

It localises to the cytoplasm. It carries out the reaction alpha-D-glucosamine 1-phosphate + acetyl-CoA = N-acetyl-alpha-D-glucosamine 1-phosphate + CoA + H(+). The catalysed reaction is N-acetyl-alpha-D-glucosamine 1-phosphate + UTP + H(+) = UDP-N-acetyl-alpha-D-glucosamine + diphosphate. The protein operates within nucleotide-sugar biosynthesis; UDP-N-acetyl-alpha-D-glucosamine biosynthesis; N-acetyl-alpha-D-glucosamine 1-phosphate from alpha-D-glucosamine 6-phosphate (route II): step 2/2. It functions in the pathway nucleotide-sugar biosynthesis; UDP-N-acetyl-alpha-D-glucosamine biosynthesis; UDP-N-acetyl-alpha-D-glucosamine from N-acetyl-alpha-D-glucosamine 1-phosphate: step 1/1. Its pathway is bacterial outer membrane biogenesis; LPS lipid A biosynthesis. In terms of biological role, catalyzes the last two sequential reactions in the de novo biosynthetic pathway for UDP-N-acetylglucosamine (UDP-GlcNAc). The C-terminal domain catalyzes the transfer of acetyl group from acetyl coenzyme A to glucosamine-1-phosphate (GlcN-1-P) to produce N-acetylglucosamine-1-phosphate (GlcNAc-1-P), which is converted into UDP-GlcNAc by the transfer of uridine 5-monophosphate (from uridine 5-triphosphate), a reaction catalyzed by the N-terminal domain. The chain is Bifunctional protein GlmU from Actinobacillus pleuropneumoniae serotype 3 (strain JL03).